We begin with the raw amino-acid sequence, 894 residues long: Alanine--tRNA ligase (894 aa).

Residues H587, H591, C691, and H695 each coordinate Zn(2+). A disordered region spans residues 739–758; that stretch reads AEGDRAAEEAKGRLQEERDA.

This sequence belongs to the class-II aminoacyl-tRNA synthetase family. It depends on Zn(2+) as a cofactor.

The protein localises to the cytoplasm. The catalysed reaction is tRNA(Ala) + L-alanine + ATP = L-alanyl-tRNA(Ala) + AMP + diphosphate. Catalyzes the attachment of alanine to tRNA(Ala) in a two-step reaction: alanine is first activated by ATP to form Ala-AMP and then transferred to the acceptor end of tRNA(Ala). Also edits incorrectly charged Ser-tRNA(Ala) and Gly-tRNA(Ala) via its editing domain. This chain is Alanine--tRNA ligase, found in Cenarchaeum symbiosum (strain A).